We begin with the raw amino-acid sequence, 363 residues long: Small ribosomal subunit biogenesis GTPase RsgA (363 aa).

Residues histidine 112 to leucine 268 enclose the CP-type G domain. Residues threonine 157 to aspartate 160 and glycine 210 to threonine 218 each bind GTP. Residues cysteine 291, cysteine 296, histidine 298, and cysteine 304 each contribute to the Zn(2+) site. The interval arginine 340–arginine 363 is disordered.

The protein belongs to the TRAFAC class YlqF/YawG GTPase family. RsgA subfamily. As to quaternary structure, monomer. Associates with 30S ribosomal subunit, binds 16S rRNA. It depends on Zn(2+) as a cofactor.

Its subcellular location is the cytoplasm. One of several proteins that assist in the late maturation steps of the functional core of the 30S ribosomal subunit. Helps release RbfA from mature subunits. May play a role in the assembly of ribosomal proteins into the subunit. Circularly permuted GTPase that catalyzes slow GTP hydrolysis, GTPase activity is stimulated by the 30S ribosomal subunit. This Xanthomonas oryzae pv. oryzae (strain PXO99A) protein is Small ribosomal subunit biogenesis GTPase RsgA.